The sequence spans 399 residues: MEITPSDVIKTLPRQEFSLVFQKVKEMEKTGAHIINLGQGNPDLPTPPHIVEALREASLNPSFHGYGPFRGYPFLKEAIAAFYKREYGVTINPETEVALFGGGKAGLYVLTQCLLNPGDIALVPNPGYPEYLSGITMARAELYEMPLYEENGYLPDFEKIDPAVLEKAKLMFLNYPNNPTGAVADAAFYAKAAAFAKEHNIHLIHDFAYGAFEFDQKPASFLEAEDAKTVGAELYSFSKTFNMAGWRMAFAVGNEKIIQAVNEFQDHVFVGMFGGLQQAASAALSGDPEHTESLKRIYKERIDFFTALCEKELGWKMEKPKGTFYVWAEIPNTFETSHQFSDYLLEHAHVVVTPGEIFGSNGKRHVRISMVSKQEDLREFVTRIQKLNLPFGSLQETSR.

Residues 103–104, Y128, N178, Y209, and 236–238 contribute to the pyridoxal 5'-phosphate site; these read GK and SFS. K239 is subject to N6-(pyridoxal phosphate)lysine. R247 contacts pyridoxal 5'-phosphate.

This sequence belongs to the class-I pyridoxal-phosphate-dependent aminotransferase family. In terms of assembly, homodimer. The cofactor is pyridoxal 5'-phosphate.

The protein localises to the cytoplasm. It functions in the pathway antibiotic biosynthesis; bacilysin biosynthesis. In terms of biological role, part of the bacABCDEF operon responsible for the biosynthesis of the nonribosomally synthesized dipeptide antibiotic bacilysin, composed of L-alanine and L-anticapsin. Bacilysin is an irreversible inactivator of the glutaminase domain of glucosamine synthetase. Catalyzes the reductive amination of the C2 ketone of tetrahydro-hydroxyphenylpyruvate (H4HPP), with L-Phe as an amino donor, to yield tetrahydrotyrosine (H4Tyr) diastereomer. D-Phe is not an effective amino donor. BacF associated to BacG converts 3E,7R- and 3Z,7R-ex-H2HPP to 2S,4R,7R- and 2S,4S,7R-H4Tyr, respectively. Given that bacilysin has the 2S,4S stereochemistry in its anticapsin moiety, it is likely that the 2S,4S-H4Tyr is the diastereomer used for the biosynthesis. The protein is Transaminase BacF of Bacillus subtilis (strain 168).